We begin with the raw amino-acid sequence, 237 residues long: Sugar fermentation stimulation protein homolog (237 aa).

This sequence belongs to the SfsA family.

This is Sugar fermentation stimulation protein homolog from Actinobacillus pleuropneumoniae serotype 3 (strain JL03).